A 51-amino-acid chain; its full sequence is Sperm protamine P1 (51 aa).

This sequence belongs to the protamine P1 family. Testis.

The protein localises to the nucleus. It localises to the chromosome. Its function is as follows. Protamines substitute for histones in the chromatin of sperm during the haploid phase of spermatogenesis. They compact sperm DNA into a highly condensed, stable and inactive complex. The chain is Sperm protamine P1 (PRM1) from Macaca mulatta (Rhesus macaque).